The following is a 1290-amino-acid chain: Alpha-factor-transporting ATPase (1290 aa).

The Cytoplasmic segment spans residues 1–25; that stretch reads MNFLSFKTTKHYHIFRYVNIRNDYR. Residues 26–46 form a helical membrane-spanning segment; it reads LLMIMIIGTVATGLVPAITSI. One can recognise an ABC transmembrane type-1 1 domain in the interval 27 to 319; sequence LMIMIIGTVA…TLHQIVVLQK (293 aa). Over 47–75 the chain is Extracellular; it reads LTGRVFDLLSVFVANGSHQGLYSQLVQRS. Asn61 is a glycosylation site (N-linked (GlcNAc...) asparagine). The chain crosses the membrane as a helical span at residues 76–96; it reads MAVMALGAASVPVMWLSLTSW. Topologically, residues 97–150 are cytoplasmic; the sequence is MHIGERQGFRIRSQILEAYLEEKPMEWYDNNEKLLGDFTQINRCVEELRSSSAE. A helical membrane pass occupies residues 151-171; it reads ASAITFQNLVAICALLGTSFY. Residues 172–173 lie on the Extracellular side of the membrane; the sequence is YS. A helical membrane pass occupies residues 174–194; sequence WSLTLIILCSSPIITFFAVVF. Topologically, residues 195–262 are cytoplasmic; sequence SRMIHVYSEK…SCFFVAANAG (68 aa). A helical transmembrane segment spans residues 263-283; it reads ILRFLTLTMFVQGFWFGSAMI. The Extracellular segment spans residues 284–296; the sequence is KKGKLNINDVITC. Residues 297-317 form a helical membrane-spanning segment; that stretch reads FHSCIMLGSTLNNTLHQIVVL. Topologically, residues 318 to 715 are cytoplasmic; sequence QKGGVAMEKI…RMIKSIRYKK (398 aa). The ABC transporter 1 domain maps to 357 to 603; it reads LTFANVSFSY…PTTTFSTWYH (247 aa). 392 to 399 lines the ATP pocket; sequence GKSGSGKS. Residues 716–736 form a helical membrane-spanning segment; the sequence is ILILGLLCSLIAGATNPVFSY. Positions 717–1007 constitute an ABC transmembrane type-1 2 domain; that stretch reads LILGLLCSLI…LVSQIPDISR (291 aa). The Extracellular portion of the chain corresponds to 737-763; the sequence is TFSFLLEGIVPSTDGKTGSSHYLAKWS. A helical transmembrane segment spans residues 764 to 784; it reads LLVLGVAAADGIFNFAKGFLL. Residues 785–838 are Cytoplasmic-facing; it reads DCCSEYWVMDLRNEVMEKLTRKNMDWFSGENNKASEISALVLNDLRDLRSLVSE. A helical membrane pass occupies residues 839-859; sequence FLSAMTSFVTVSTIGLIWALV. At 860–865 the chain is on the extracellular side; it reads SGWKLS. A helical membrane pass occupies residues 866-886; it reads LVCISMFPLIIIFSAIYGGIL. At 887–945 the chain is on the cytoplasmic side; that stretch reads QKCETDYKTSVAQLENCLYQIVTNIKTIKCLQAEFHFQLTYHDLKIKMQQIASKRAIAT. The helical transmembrane segment at 946–966 threads the bilayer; sequence GFGISMTNMIVMCIQAIIYYY. Topologically, residues 967–981 are extracellular; sequence GLKLVMIHEYTSKEM. A helical membrane pass occupies residues 982 to 1002; that stretch reads FTTFTLLLFTIMSCTSLVSQI. At 1003–1290 the chain is on the cytoplasmic side; sequence PDISRGQRAA…LFQIVSNQSS (288 aa). Residue Lys1022 forms a Glycyl lysine isopeptide (Lys-Gly) (interchain with G-Cter in ubiquitin) linkage. An ABC transporter 2 domain is found at 1052–1287; sequence VSIQNLTFAY…RGELFQIVSN (236 aa). 1087 to 1094 provides a ligand contact to ATP; it reads GESGTGKS.

It belongs to the ABC transporter superfamily. Alpha-factor sex pheromone exporter (TC 3.A.1.206) family. Degraded via the ubiquitin system.

The protein resides in the membrane. It catalyses the reaction an [alpha-factor](in) + ATP + H2O = an [alpha-factor](out) + ADP + phosphate + H(+). In terms of biological role, STE6 is required in yeast MATA cells for production of A-factor pheromone. STE6 is involved in the transport of the farnesyl-derivation of the A-factor pheromone. In Saccharomyces cerevisiae (strain ATCC 204508 / S288c) (Baker's yeast), this protein is Alpha-factor-transporting ATPase (STE6).